Consider the following 142-residue polypeptide: Large ribosomal subunit protein uL13 (142 aa).

Belongs to the universal ribosomal protein uL13 family. In terms of assembly, part of the 50S ribosomal subunit.

In terms of biological role, this protein is one of the early assembly proteins of the 50S ribosomal subunit, although it is not seen to bind rRNA by itself. It is important during the early stages of 50S assembly. The sequence is that of Large ribosomal subunit protein uL13 from Actinobacillus succinogenes (strain ATCC 55618 / DSM 22257 / CCUG 43843 / 130Z).